The following is a 303-amino-acid chain: Methionyl-tRNA formyltransferase (303 aa).

110-113 (SLLP) contacts (6S)-5,6,7,8-tetrahydrofolate.

The protein belongs to the Fmt family.

The catalysed reaction is L-methionyl-tRNA(fMet) + (6R)-10-formyltetrahydrofolate = N-formyl-L-methionyl-tRNA(fMet) + (6S)-5,6,7,8-tetrahydrofolate + H(+). Attaches a formyl group to the free amino group of methionyl-tRNA(fMet). The formyl group appears to play a dual role in the initiator identity of N-formylmethionyl-tRNA by promoting its recognition by IF2 and preventing the misappropriation of this tRNA by the elongation apparatus. The chain is Methionyl-tRNA formyltransferase from Ehrlichia ruminantium (strain Gardel).